We begin with the raw amino-acid sequence, 436 residues long: Ribulose bisphosphate carboxylase large chain (436 aa).

Residues N104 and T154 each coordinate substrate. K156 serves as the catalytic Proton acceptor. K158 provides a ligand contact to substrate. K182, D184, and E185 together coordinate Mg(2+). Position 182 is an N6-carboxylysine (K182). The Proton acceptor role is filled by H275. 3 residues coordinate substrate: R276, H308, and S360.

The protein belongs to the RuBisCO large chain family. Type I subfamily. In terms of assembly, heterohexadecamer of 8 large chains and 8 small chains. Mg(2+) serves as cofactor.

The protein resides in the plastid. It localises to the chloroplast. It catalyses the reaction 2 (2R)-3-phosphoglycerate + 2 H(+) = D-ribulose 1,5-bisphosphate + CO2 + H2O. The catalysed reaction is D-ribulose 1,5-bisphosphate + O2 = 2-phosphoglycolate + (2R)-3-phosphoglycerate + 2 H(+). Its function is as follows. RuBisCO catalyzes two reactions: the carboxylation of D-ribulose 1,5-bisphosphate, the primary event in carbon dioxide fixation, as well as the oxidative fragmentation of the pentose substrate in the photorespiration process. Both reactions occur simultaneously and in competition at the same active site. The polypeptide is Ribulose bisphosphate carboxylase large chain (Euglena myxocylindracea).